We begin with the raw amino-acid sequence, 124 residues long: UPF0231 protein SO_3983 (124 aa).

It belongs to the UPF0231 family.

This Shewanella oneidensis (strain ATCC 700550 / JCM 31522 / CIP 106686 / LMG 19005 / NCIMB 14063 / MR-1) protein is UPF0231 protein SO_3983.